Consider the following 557-residue polypeptide: Prosaposin (557 aa).

The first 16 residues, 1 to 16 (MYALALFASLLATALT), serve as a signal peptide directing secretion. The propeptide occupies 17–59 (SPVQDPKTCSGGSAVLCRDVKTAVDCGAVKHCQQMVWSKPTAK). Positions 18 to 58 (PVQDPKTCSGGSAVLCRDVKTAVDCGAVKHCQQMVWSKPTA) constitute a Saposin A-type 1 domain. Saposin B-type domains lie at 59–142 (KSLP…QSLQ), 193–277 (NEDV…NEVK), 313–394 (NVIL…AARP), and 438–519 (NGGF…PSAY). 3 disulfide bridges follow: cysteine 63/cysteine 138, cysteine 66/cysteine 132, and cysteine 94/cysteine 106. Asparagine 80 carries N-linked (GlcNAc...) asparagine glycosylation. Residues 143–193 (EYLAEQNQKQLESNKIPEVDMARVVAPFMSNIPLLLYPQDHPRSQPQPKAN) constitute a propeptide that is removed on maturation. Disulfide bonds link cysteine 197–cysteine 273, cysteine 200–cysteine 267, and cysteine 229–cysteine 240. A glycan (N-linked (GlcNAc...) asparagine) is linked at asparagine 214. The propeptide occupies 277-312 (KRVPMKTLVPATETIKNILPALEMMDPYEQNLVQAH). Cystine bridges form between cysteine 317–cysteine 390, cysteine 320–cysteine 384, and cysteine 348–cysteine 359. The N-linked (GlcNAc...) asparagine glycan is linked to asparagine 334. Residues 393–437 (RPELVEALEQPAPAIVSALLKEPTPPKQPAQPKQSALPAHVPPQK) constitute a propeptide that is removed on maturation. 3 disulfides stabilise this stretch: cysteine 442–cysteine 515, cysteine 445–cysteine 509, and cysteine 473–cysteine 484. Asparagine 459 is a glycosylation site (N-linked (GlcNAc...) asparagine). A propeptide spanning residues 520 to 557 (KLLLGTEKCVWGPSYWCQNMETAARCNAVDHCKRHVWN) is cleaved from the precursor. In terms of domain architecture, Saposin A-type 2 spans 521 to 557 (LLLGTEKCVWGPSYWCQNMETAARCNAVDHCKRHVWN).

Saposin-B is a homodimer. Prosaposin exists as a roughly half-half mixture of monomers and disulfide-linked dimers. Monomeric prosaposin interacts (via C-terminus) with sortilin/SORT1, the interaction is required for targeting to lysosomes. Interacts with GRN; facilitates lysosomal delivery of progranulin from the extracellular space and the biosynthetic pathway.

The protein resides in the secreted. It localises to the lysosome. Functionally, behaves as a myelinotrophic and neurotrophic factor, these effects are mediated by its G-protein-coupled receptors, GPR37 and GPR37L1, undergoing ligand-mediated internalization followed by ERK phosphorylation signaling. Saposin-A and saposin-C stimulate the hydrolysis of glucosylceramide by beta-glucosylceramidase (EC 3.2.1.45) and galactosylceramide by beta-galactosylceramidase (EC 3.2.1.46). Saposin-C apparently acts by combining with the enzyme and acidic lipid to form an activated complex, rather than by solubilizing the substrate. In terms of biological role, saposin-B stimulates the hydrolysis of galacto-cerebroside sulfate by arylsulfatase A (EC 3.1.6.8), GM1 gangliosides by beta-galactosidase (EC 3.2.1.23) and globotriaosylceramide by alpha-galactosidase A (EC 3.2.1.22). Saposin-B forms a solubilizing complex with the substrates of the sphingolipid hydrolases. Its function is as follows. Saposin-D is a specific sphingomyelin phosphodiesterase activator (EC 3.1.4.12). Functionally, saposins are specific low-molecular mass non-enzymatic proteins, they participate in the lysosomal degradation of sphingolipids, which takes place by the sequential action of specific hydrolases. The protein is Prosaposin (Psap) of Mus musculus (Mouse).